The chain runs to 232 residues: MAGVRSLRCSRGCAGGCECGDKGKCRDSSLLGKRLSEDSSRHQLLQKWASMWSSMSEDASVADMERARLEEAAAAEERPLVFLCSGCRRPLGDSLSWVASQEDTNCILLRCVSCNVSVDKEQKLSKREKENGCVLETLCCAGCSLNLGYVYRCTPKNLDYKRDLFCLSVEAIESYVLGSSEKQIVSEDKELFNLESRVEIEKSLTQMEDVLKALQMKLWEAESKLSFATCKS.

Phosphoserine occurs at positions 36, 39, and 40. One can recognise a Mis18 domain in the interval 79–177 (PLVFLCSGCR…SVEAIESYVL (99 aa)). Zn(2+)-binding residues include Cys84, Cys87, Cys140, and Cys143. Lys161 participates in a covalent cross-link: Glycyl lysine isopeptide (Lys-Gly) (interchain with G-Cter in SUMO2). The residue at position 232 (Ser232) is a Phosphoserine.

It belongs to the mis18 family. In terms of assembly, homodimer, and heterodimer with OIP5/MIS18B. Identified in a complex containing MIS18A, OIP5/MIS18B, MIS18BP1, RBBP7 and RBBP4.

Its subcellular location is the nucleus. The protein localises to the chromosome. It localises to the centromere. Functionally, required for recruitment of CENPA to centromeres and normal chromosome segregation during mitosis. In Pan troglodytes (Chimpanzee), this protein is Protein Mis18-alpha (MIS18A).